The sequence spans 245 residues: Eukaryotic translation initiation factor 6 (245 aa).

A phosphoserine; by CK1 mark is found at serine 174 and serine 175.

Belongs to the eIF-6 family. As to quaternary structure, monomer. Associates with the 60S ribosomal subunit. Post-translationally, phosphorylation at Ser-174 and Ser-175 promotes nuclear export.

It localises to the cytoplasm. The protein resides in the nucleus. The protein localises to the nucleolus. Its function is as follows. Binds to the 60S ribosomal subunit and prevents its association with the 40S ribosomal subunit to form the 80S initiation complex in the cytoplasm. Is also involved in ribosome biogenesis. Associates with pre-60S subunits in the nucleus and is involved in its nuclear export. This Candida albicans (strain SC5314 / ATCC MYA-2876) (Yeast) protein is Eukaryotic translation initiation factor 6.